A 481-amino-acid polypeptide reads, in one-letter code: Delta 4,5-hexuronate-2-O-sulfatase (481 aa).

Serine 64 is subject to 3-oxoalanine (Ser). Cysteine 225, cysteine 226, histidine 462, and histidine 469 together coordinate Zn(2+). The segment at 453–481 (VDADPRCRNHTPGYPSHEGPGAREILKRK) is disordered. Positions 472–481 (PGAREILKRK) are enriched in basic and acidic residues.

This sequence belongs to the sulfatase family. It depends on Zn(2+) as a cofactor. In terms of processing, the conversion to 3-oxoalanine (also known as C-formylglycine, FGly), of a serine or cysteine residue in prokaryotes and of a cysteine residue in eukaryotes, is critical for catalytic activity.

Its function is as follows. Exosulfatase involved in the degradation of the glycosaminoglycans (GAGs) chondroitin sulfate (CS), dermatan sulfate (DS) and heparan sulfate (HS). 2-O-sulfatase active on unsaturated non-reducing end hexuronate units. Has a slight preference for HS-derived structures. GAG-specific sulfatases play a key role in the persistence of the major human gut symbiont B.thetaiotaomicron in the host gastrointestinal tract. This is Delta 4,5-hexuronate-2-O-sulfatase from Bacteroides thetaiotaomicron (strain ATCC 29148 / DSM 2079 / JCM 5827 / CCUG 10774 / NCTC 10582 / VPI-5482 / E50).